The sequence spans 77 residues: MLCLPVFIILLLLASPAASNPLKTRIQSDLIRAALEDADMKNEKNILSSIMGSLGTIGNVVGNVCCSITKSCCASEE.

An N-terminal signal peptide occupies residues 1 to 19 (MLCLPVFIILLLLASPAAS). The propeptide occupies 20 to 44 (NPLKTRIQSDLIRAALEDADMKNEK).

Belongs to the conotoxin T superfamily. In terms of processing, contains 2 disulfide bonds that can be either 'C1-C3, C2-C4' or 'C1-C4, C2-C3', since these disulfide connectivities have been observed for conotoxins with cysteine framework V (for examples, see AC P0DQQ7 and AC P81755). As to expression, expressed by the venom duct.

The protein resides in the secreted. The sequence is that of Conotoxin Ar5.1 b from Conus arenatus (Sand-dusted cone).